Consider the following 267-residue polypeptide: MSNKVHLGHTARKRFGQNFLTDGNIINRIVGAISPDDDHVMVEIGPGLAALTEPVAMGIKNLTVIELDRDLAERLKVHPTLKDKLTIHQGDAMKFDFSQLVEPERKLKVFGNLPYNISTPLMFHLFEFAEHIENMHFMLQKEVVLRLSASPGTKAYGKLTVMAQYYCQVVPVLEVPPGCFTPPPKVDSAVVRLVPYAEKPWPCHDVEMLRKVCNTAFNMRRKTLRNNLKPLLQDADFDVLGIDAGLRPEDISVAQYVAMANYLCEKR.

S-adenosyl-L-methionine contacts are provided by Asn18, Leu20, Gly45, Glu66, Asp91, and Asn112.

The protein belongs to the class I-like SAM-binding methyltransferase superfamily. rRNA adenine N(6)-methyltransferase family. RsmA subfamily.

Its subcellular location is the cytoplasm. It catalyses the reaction adenosine(1518)/adenosine(1519) in 16S rRNA + 4 S-adenosyl-L-methionine = N(6)-dimethyladenosine(1518)/N(6)-dimethyladenosine(1519) in 16S rRNA + 4 S-adenosyl-L-homocysteine + 4 H(+). Its function is as follows. Specifically dimethylates two adjacent adenosines (A1518 and A1519) in the loop of a conserved hairpin near the 3'-end of 16S rRNA in the 30S particle. May play a critical role in biogenesis of 30S subunits. The polypeptide is Ribosomal RNA small subunit methyltransferase A (Shewanella amazonensis (strain ATCC BAA-1098 / SB2B)).